Consider the following 398-residue polypeptide: T-box transcription factor TBX1 (398 aa).

A disordered region spans residues 23–72; it reads AAGGFPGAASPGADPYGPREPPPPPPRYDPCAAAAPGAPGPPPPPHAYPF. The segment covering 29–38 has biased composition (low complexity); sequence GAASPGADPY. Composition is skewed to pro residues over residues 40-50 and 60-69; these read PREPPPPPPRY and APGPPPPPHA. Residues 119-297 constitute a DNA-binding region (T-box); that stretch reads LWDEFNQLGT…SNPFAKGFRD (179 aa).

As to quaternary structure, binds DNA as a dimer. Interacts with DSCR6. Interacts with NKX2-5.

Its subcellular location is the nucleus. Transcription factor that plays a key role in cardiovascular development by promoting pharyngeal arch segmentation during embryonic development. Also involved in craniofacial muscle development. Together with NKX2-5, acts as a regulator of asymmetric cardiac morphogenesis by promoting expression of PITX2. Acts upstream of TBX1 for the formation of the thymus and parathyroid glands from the third pharyngeal pouch. Required for hair follicle stem cell self-renewal. Binds to the palindromic T site 5'-TTCACACCTAGGTGTGAA-3' DNA sequence. This is T-box transcription factor TBX1 from Homo sapiens (Human).